Reading from the N-terminus, the 262-residue chain is Spindlin-1 (262 aa).

The interval 1-49 (MKTPFGKTPGQRSRADAGHAGVSANMMKKRTSHKKHRTSVGPSKPVSQP) is disordered. Glycyl lysine isopeptide (Lys-Gly) (interchain with G-Cter in SUMO2) cross-links involve residues Lys-7 and Lys-28. Basic residues predominate over residues 27–38 (MKKRTSHKKHRT). An N6-acetyllysine; alternate modification is found at Lys-44. A Glycyl lysine isopeptide (Lys-Gly) (interchain with G-Cter in SUMO2); alternate cross-link involves residue Lys-44. The segment at 53 to 116 (IVGCRIQHGW…RVSALEVLPD (64 aa)) is tudor-like domain 1. Positions 93-98 (GFDCVY) are histone H3K4me3 and H3R8me2a binding. A phosphoserine; by AURKA mark is found at Ser-109 and Ser-124. The tudor-like domain 2 stretch occupies residues 132–193 (MIGKAVEHMF…DYKEGDLRIM (62 aa)). A region of interest (histone H3K4me3 and H3R8me2a binding) is located at residue Glu-142. The residue at position 199 (Ser-199) is a Phosphoserine. A tudor-like domain 3 region spans residues 213–262 (LVGKQVEYAKEDGSKRTGMVIHQVEAKPSVYFIKFDDDFHIYVYDLVKTS). The histone H3K4me3 and H3R8me2a binding stretch occupies residues 250 to 252 (DFH).

It belongs to the SPIN/STSY family. In terms of assembly, homodimer; may form higher-order oligomers. Interacts with TCF7L2/TCF4; the interaction is direct. Interacts with HABP4 and SERBP1. Interacts with SPINDOC; SPINDOC stabilizes SPIN1 and enhances its association with bivalent H3K4me3K9me3 mark. Interacts with SPOCD1; promoting recruitment of PIWIL4 and SPOCD1 to transposons. Phosphorylated during oocyte meiotic maturation.

The protein localises to the nucleus. It localises to the nucleolus. Its function is as follows. Chromatin reader that specifically recognizes and binds histone H3 both trimethylated at 'Lys-4' and 'Lys-9' (H3K4me3K9me3) and is involved in piRNA-mediated retrotransposon silencing during spermatogenesis. Plays a key role in the initiation of the PIWIL4-piRNA pathway, a pathway that directs transposon DNA methylation and silencing in the male embryonic germ cells, by promoting recruitment of DNA methylation machinery to transposons: binds young, but not old, LINE1 transposons, which are specifically marked with H3K4me3K9me3, and promotes the recruitment of PIWIL4 and SPOCD1 to transposons, leading to piRNA-directed DNA methylation. Also recognizes and binds histone H3 both trimethylated at 'Lys-4' and asymmetrically dimethylated at 'Arg-8' (H3K4me3 and H3R8me2a) and acts as an activator of Wnt signaling pathway downstream of PRMT2. Overexpression induces metaphase arrest and chromosomal instability. Overexpression induces metaphase arrest and chromosomal instability. Localizes to active rDNA loci and promotes the expression of rRNA genes. May play a role in cell-cycle regulation during the transition from gamete to embryo. Involved in oocyte meiotic resumption, a process that takes place before ovulation to resume meiosis of oocytes blocked in prophase I: may act by regulating maternal transcripts to control meiotic resumption. This chain is Spindlin-1 (Spin1), found in Rattus norvegicus (Rat).